The following is a 418-amino-acid chain: Serine--tRNA ligase (418 aa).

Residue 227-229 (TSE) coordinates L-serine. Residues 258 to 260 (RRE) and V274 contribute to the ATP site. E281 provides a ligand contact to L-serine. Residue 345-348 (ELTS) participates in ATP binding. Residue T380 participates in L-serine binding.

It belongs to the class-II aminoacyl-tRNA synthetase family. Type-1 seryl-tRNA synthetase subfamily. In terms of assembly, homodimer. The tRNA molecule binds across the dimer.

The protein resides in the cytoplasm. It carries out the reaction tRNA(Ser) + L-serine + ATP = L-seryl-tRNA(Ser) + AMP + diphosphate + H(+). The catalysed reaction is tRNA(Sec) + L-serine + ATP = L-seryl-tRNA(Sec) + AMP + diphosphate + H(+). The protein operates within aminoacyl-tRNA biosynthesis; selenocysteinyl-tRNA(Sec) biosynthesis; L-seryl-tRNA(Sec) from L-serine and tRNA(Sec): step 1/1. In terms of biological role, catalyzes the attachment of serine to tRNA(Ser). Is also able to aminoacylate tRNA(Sec) with serine, to form the misacylated tRNA L-seryl-tRNA(Sec), which will be further converted into selenocysteinyl-tRNA(Sec). The protein is Serine--tRNA ligase of Rhodococcus opacus (strain B4).